The chain runs to 353 residues: Methylthioribose-1-phosphate isomerase (353 aa).

Residue aspartate 241 is the Proton donor of the active site.

This sequence belongs to the eIF-2B alpha/beta/delta subunits family. MtnA subfamily.

Its subcellular location is the cytoplasm. The protein resides in the nucleus. The catalysed reaction is 5-(methylsulfanyl)-alpha-D-ribose 1-phosphate = 5-(methylsulfanyl)-D-ribulose 1-phosphate. Its pathway is amino-acid biosynthesis; L-methionine biosynthesis via salvage pathway; L-methionine from S-methyl-5-thio-alpha-D-ribose 1-phosphate: step 1/6. In terms of biological role, catalyzes the interconversion of methylthioribose-1-phosphate (MTR-1-P) into methylthioribulose-1-phosphate (MTRu-1-P). The polypeptide is Methylthioribose-1-phosphate isomerase (mri1) (Danio rerio (Zebrafish)).